The chain runs to 77 residues: Translation initiation factor IF-1, chloroplastic (77 aa).

The S1-like domain maps to 1 to 72; sequence MNKQGLFQME…TKGRIVYRQR (72 aa).

Belongs to the IF-1 family. In terms of assembly, component of the 30S ribosomal translation pre-initiation complex which assembles on the 30S ribosome in the order IF-2 and IF-3, IF-1 and N-formylmethionyl-tRNA(fMet); mRNA recruitment can occur at any time during PIC assembly.

The protein resides in the plastid. It is found in the chloroplast. In terms of biological role, one of the essential components for the initiation of protein synthesis. Stabilizes the binding of IF-2 and IF-3 on the 30S subunit to which N-formylmethionyl-tRNA(fMet) subsequently binds. Helps modulate mRNA selection, yielding the 30S pre-initiation complex (PIC). Upon addition of the 50S ribosomal subunit IF-1, IF-2 and IF-3 are released leaving the mature 70S translation initiation complex. This is Translation initiation factor IF-1, chloroplastic from Nephroselmis olivacea (Green alga).